The chain runs to 391 residues: Nucleosome assembly protein 1-like 1 (391 aa).

Met-1 carries the post-translational modification N-acetylmethionine. Residues 1 to 10 (MADIDNKEQS) show a composition bias toward basic and acidic residues. The segment at 1–32 (MADIDNKEQSELDQDLDDVEEVEEEETGEETK) is disordered. Ala-2 is modified (N-acetylalanine). Ser-10 is subject to Phosphoserine. Residues 11 to 28 (ELDQDLDDVEEVEEEETG) show a composition bias toward acidic residues. A phosphothreonine mark is found at Thr-62 and Thr-64. Ser-69 is modified (phosphoserine). N6-acetyllysine is present on Lys-116. An NAP1L motif motif is present at residues 125-150 (YEPTEEECEWKPDEEDEISEELKEKA). Residues 132–143 (CEWKPDEEDEIS) are compositionally biased toward acidic residues. Positions 132 to 163 (CEWKPDEEDEISEELKEKAKIEDEKKDEEKED) are disordered. Ser-143 bears the Phosphoserine mark. Basic and acidic residues predominate over residues 144-163 (EELKEKAKIEDEKKDEEKED). The short motif at 273-279 (IKKKQKH) is the Nuclear localization signal element. Positions 346–376 (AIEDDDDDYDEEGEEADEEGEEEGDEENDPD) are enriched in acidic residues. Positions 346 to 391 (AIEDDDDDYDEEGEEADEEGEEEGDEENDPDYDPKKDQNPAECKQQ) are disordered. The span at 377–391 (YDPKKDQNPAECKQQ) shows a compositional bias: basic and acidic residues. The residue at position 388 (Cys-388) is a Cysteine methyl ester. A lipid anchor (S-farnesyl cysteine) is attached at Cys-388. The propeptide at 389–391 (KQQ) is removed in mature form.

Belongs to the nucleosome assembly protein (NAP) family. In terms of assembly, homodimer. The dimer binds strongly and sequentially to single and double H2A-H2B heterodimers. Interacts with ERCC6; this interaction increases ERCC6 processivity. Interacts with RAD54. Interacts with SETD1A. (Microbial infection) Interacts with human herpesvirus 8 protein LANA1 (via N-terminus); this interaction is required for LANA1-dependent DNA replication. As to quaternary structure, (Microbial infection) Interacts with hepatitis virus protein NS5A (via C-terminus); this interaction sequesters NAP1L1 in the cytoplasm, blocking its nuclear translocation. In terms of assembly, (Microbial infection) Interacts with Chikungunya virus non-structural protein 3 (via C-terminus). Monoglycylated on glutamate residues. Cannot be polyglycylated due to the absence of functional TTLL10 in human. Post-translationally, polyglutamylated by TTLL4 on glutamate residues, resulting in polyglutamate chains on the gamma-carboxyl group. Both polyglutamylation and monoglycylation modifications can coexist on the same protein on adjacent residues, and lowering polyglycylation levels increases polyglutamylation, and reciprocally. Ubiquitously expressed.

The protein localises to the nucleus. The protein resides in the melanosome. It localises to the cytoplasm. In terms of biological role, histone chaperone that plays a role in the nuclear import of H2A-H2B and nucleosome assembly. Also participates in several important DNA repair mechanisms: greatly enhances ERCC6-mediated chromatin remodeling which is essential for transcription-coupled nucleotide excision DNA repair. Also stimulates homologous recombination (HR) by RAD51 and RAD54 which is essential in mitotic DNA double strand break (DSB) repair. Plays a key role in the regulation of embryonic neurogenesis. Promotes the proliferation of neural progenitors and inhibits neuronal differentiation during cortical development. Regulates neurogenesis via the modulation of RASSF10; regulates RASSF10 expression by promoting SETD1A-mediated H3K4 methylation at the RASSF10 promoter. (Microbial infection) Positively regulates Epstein-Barr virus reactivation in epithelial cells through the induction of viral BZLF1 expression. Its function is as follows. (Microbial infection) Together with human herpesvirus 8 protein LANA1, assists the proper assembly of the nucleosome on the replicated viral DNA. This chain is Nucleosome assembly protein 1-like 1 (NAP1L1), found in Homo sapiens (Human).